The sequence spans 366 residues: Probable S-adenosyl-L-methionine-binding protein AF_0433 (366 aa).

The 131-residue stretch at 6–136 (LRQVGVIRSP…YSSTIDSVGN (131 aa)) folds into the TsaA-like domain. S-adenosyl-L-methionine contacts are provided by residues 23-25 (PHQ), 61-62 (DR), arginine 85, and 116-119 (LDGT).

The protein belongs to the tRNA methyltransferase O family.

The protein is Probable S-adenosyl-L-methionine-binding protein AF_0433 of Archaeoglobus fulgidus (strain ATCC 49558 / DSM 4304 / JCM 9628 / NBRC 100126 / VC-16).